The primary structure comprises 387 residues: 1-deoxy-D-xylulose 5-phosphate reductoisomerase (387 aa).

NADPH-binding residues include Thr10, Gly11, Ile13, Asn38, and Asn122. 1-deoxy-D-xylulose 5-phosphate is bound at residue Lys123. An NADPH-binding site is contributed by Glu124. Asp148 serves as a coordination point for Mn(2+). The 1-deoxy-D-xylulose 5-phosphate site is built by Ser149, Glu150, Ser174, and His197. Glu150 provides a ligand contact to Mn(2+). Gly203 contributes to the NADPH binding site. Residues Ser210, Asn215, Lys216, and Glu219 each contribute to the 1-deoxy-D-xylulose 5-phosphate site. Glu219 lines the Mn(2+) pocket.

Belongs to the DXR family. Mg(2+) serves as cofactor. The cofactor is Mn(2+).

The catalysed reaction is 2-C-methyl-D-erythritol 4-phosphate + NADP(+) = 1-deoxy-D-xylulose 5-phosphate + NADPH + H(+). The protein operates within isoprenoid biosynthesis; isopentenyl diphosphate biosynthesis via DXP pathway; isopentenyl diphosphate from 1-deoxy-D-xylulose 5-phosphate: step 1/6. Catalyzes the NADPH-dependent rearrangement and reduction of 1-deoxy-D-xylulose-5-phosphate (DXP) to 2-C-methyl-D-erythritol 4-phosphate (MEP). This is 1-deoxy-D-xylulose 5-phosphate reductoisomerase from Ehrlichia ruminantium (strain Gardel).